We begin with the raw amino-acid sequence, 434 residues long: MEKSVNVIGAGLAGSEAAWQLVKRGVKVDLYEMRPVKQTPAHHTDKFAELVCTNSLRANGLTNAVGVIKEEMRILDSIIIEAADKASVPAGGALAVDRHEFSGYITDKVKNHPLVTVHTEEVTTIPEGPTIIATGPLTSPALADEIKQLTGEEYLYFYDAAAPIIEKDSIDMDKVYLKSRYDKGEAAYLNCPMSEEEFNAFYEALVTAETAALKEFEKEVFFEGCMPIEVMAKRGIKTMLFGPLKPVGLEDPKTGKRPYAVLQLRQDDAAGTLYNMVGFQTHLKWGEQKRVFGMIPGLENAEIVRYGVMHRNTFINSPTVLEPTYQLKTRNDLFFAGQMTGVEGYVESAASGLAAGINAANFVEEKELVVFPAETAIGSLAHYITSASKKSFQPMNVNFGLFPELETKIRAKQERNEKLAERALNAIKRVAEEL.

9–14 (GAGLAG) contributes to the FAD binding site.

It belongs to the MnmG family. TrmFO subfamily. It depends on FAD as a cofactor.

The protein resides in the cytoplasm. The enzyme catalyses uridine(54) in tRNA + (6R)-5,10-methylene-5,6,7,8-tetrahydrofolate + NADH + H(+) = 5-methyluridine(54) in tRNA + (6S)-5,6,7,8-tetrahydrofolate + NAD(+). It carries out the reaction uridine(54) in tRNA + (6R)-5,10-methylene-5,6,7,8-tetrahydrofolate + NADPH + H(+) = 5-methyluridine(54) in tRNA + (6S)-5,6,7,8-tetrahydrofolate + NADP(+). Catalyzes the folate-dependent formation of 5-methyl-uridine at position 54 (M-5-U54) in all tRNAs. In Listeria monocytogenes serotype 4b (strain F2365), this protein is Methylenetetrahydrofolate--tRNA-(uracil-5-)-methyltransferase TrmFO.